A 526-amino-acid chain; its full sequence is MSTTVRPDEVSSILRKQLAGFESEAEVYDVGTVLQVGDGIARVYGLSLVAAGELLEFPNKVMGMALNLEEDNVGCVLFGESNTVKEGDTVRRTNILASVPVGEAMLGRVVTPLGEPIDGKGSIETEIRVPLERRAPGVIFRKSVHEPLQTGLKAIDSMIPIGRGQRELIIGDRQTGKTAVAIDTIINQKGKGVFCIYVAIGLKGSTVAQVVNTLEKYGAMEYTTVISATASDPAPLQFIAPFAGAALGEYFRDTGRHALVVYDDLSKQAVAYRQLSLLLRRPPGREAYPGDVFYLHSRLLERAAKITDDIEVARKMNDLPDALKPLVKGGGSLTALPVIETQAGDVSAYIPTNVISITDGQIFLESNLFNSGQRPAINVGISVSRVGGAAQIKAMKKVAGTLRLDLAQFRELEAFSKFGSDLDKTTKAQLDRGARLVEILKQGQYIPMPVEKQVAIIFLGTQGLLDAVEVPHIRRFEEEFLSMLEHKHPEILKTIAEKGTLEADTAKQLKEAAERFVSSFNQKVKA.

Residue 171–178 (GDRQTGKT) participates in ATP binding.

The protein belongs to the ATPase alpha/beta chains family. As to quaternary structure, F-type ATPases have 2 components, CF(1) - the catalytic core - and CF(0) - the membrane proton channel. CF(1) has five subunits: alpha(3), beta(3), gamma(1), delta(1), epsilon(1). CF(0) has four main subunits: a, b, b' and c.

Its subcellular location is the cell inner membrane. It catalyses the reaction ATP + H2O + 4 H(+)(in) = ADP + phosphate + 5 H(+)(out). In terms of biological role, produces ATP from ADP in the presence of a proton gradient across the membrane. The alpha chain is a regulatory subunit. The sequence is that of ATP synthase subunit alpha from Chlorobium limicola (strain DSM 245 / NBRC 103803 / 6330).